A 1344-amino-acid polypeptide reads, in one-letter code: DEAD-box ATP-dependent RNA helicase FANCM (1344 aa).

The segment at 39–61 (SSSHFTPLANPPITANLTKPPAK) is disordered. A Helicase ATP-binding domain is found at 124–292 (ITKTALFSNT…GIIDNLQIST (169 aa)). 137–144 (LPTGLGKT) serves as a coordination point for ATP. Residues 240–243 (DEAH) carry the DEAH box motif. Positions 450 to 621 (KLSKMLEILV…SFNFHPSPRM (172 aa)) constitute a Helicase C-terminal domain. Disordered stretches follow at residues 765-790 (VNTSQRKAKQVESPTSTLETTEKDYE), 1110-1148 (EVSSGAEMSADENEDVTGDSFEDSFIDDGTMPTANTQAE), 1183-1218 (YSAGPLTRINESRSDSDKSLSSLRTPKTTNSESNQD), and 1307-1344 (KQRSEAKEKEDATVIPNPGMQRSDGMEKDAPSFDLGLW). Residues 1118 to 1135 (SADENEDVTGDSFEDSFI) are compositionally biased toward acidic residues. Polar residues predominate over residues 1207 to 1218 (TPKTTNSESNQD). The span at 1308-1318 (QRSEAKEKEDA) shows a compositional bias: basic and acidic residues.

The protein belongs to the DEAD box helicase family. DEAH subfamily. FANCM sub-subfamily.

Its subcellular location is the nucleus. It carries out the reaction ATP + H2O = ADP + phosphate + H(+). Involved in ordered homologous recombination (HR) events in somatic and meiotic cells. Involved in the suppression of spontaneous HR events in somatic cells. Has an opposite function to the DNA binding cofactor MHF1 which promotes spontaneous HR. Functions in replicative repair independently of MHF1 and in a parallel pathway to the endonuclease MUS81. Acts in the same pathway as the two DNA-binding cofactors MHF1 and MHF2 to restrain class II meiotic crossover (CO), and acts exclusively with MHF1 and MHF2 during meiosis to repair DNA interstrand cross-links (ICLs). This common pathway is in parallel to the pathway that involves the RECQ4A helicase. Seems to be involved in the stabilization of recombination intermediates. Involved in DNA double-strand break (DSB) repair during meiosis. Required for synthesis-dependent strand annealing (SDSA) and to a lesser extent for single-strand annealing (SSA). May process meiotic DSB repair intermediates, possibly D-loops, driving them toward noncrossover (NCO) resolution. This is DEAD-box ATP-dependent RNA helicase FANCM from Arabidopsis thaliana (Mouse-ear cress).